Consider the following 596-residue polypeptide: Phosphoenolpyruvate carboxykinase [GTP] (596 aa).

Residues arginine 77 and 205 to 207 (YGG) contribute to the substrate site. The Mn(2+) site is built by lysine 214 and histidine 234. Serine 256 contributes to the substrate binding site. A GTP-binding site is contributed by 257–262 (ACGKTN). Residue cysteine 258 is part of the active site. Aspartate 283 is a binding site for Mn(2+). A disordered region spans residues 362 to 388 (KKGSTEKAAHPNSRFTAPAKNNPAISP). Substrate is bound at residue 373–375 (NSR). Residues arginine 375, arginine 406, and 499-502 (YGDN) contribute to the GTP site.

Belongs to the phosphoenolpyruvate carboxykinase [GTP] family. Monomer. Mn(2+) serves as cofactor.

It localises to the cytoplasm. It catalyses the reaction oxaloacetate + GTP = phosphoenolpyruvate + GDP + CO2. It participates in carbohydrate biosynthesis; gluconeogenesis. Its function is as follows. Catalyzes the conversion of oxaloacetate (OAA) to phosphoenolpyruvate (PEP), the rate-limiting step in the metabolic pathway that produces glucose from lactate and other precursors derived from the citric acid cycle. This chain is Phosphoenolpyruvate carboxykinase [GTP], found in Anaeromyxobacter sp. (strain K).